Reading from the N-terminus, the 423-residue chain is G protein-activated inward rectifier potassium channel 2 (423 aa).

Residues 1-89 lie on the Cytoplasmic side of the membrane; sequence MAKLTESMTN…IFTTLVDLKW (89 aa). S16 and S23 each carry phosphoserine. A helical membrane pass occupies residues 90 to 114; the sequence is RFNLLIFVMVYTVTWLFFGMIWWLI. The Extracellular segment spans residues 115 to 138; that stretch reads AYIRGDMDHIEDPSWTPCVTNLNG. The helical; Pore-forming intramembrane region spans 139–150; that stretch reads FVSAFLFSIETE. The pore-forming intramembrane region spans 151-157; that stretch reads TTIGYGY. Residues 152-157 carry the Selectivity filter motif; the sequence is TIGYGY. Over 158–166 the chain is Extracellular; it reads RVITDKCPE. A helical membrane pass occupies residues 167–188; sequence GIILLLIQSVLGSIVNAFMVGC. Residues 189–423 are Cytoplasmic-facing; it reads MFVKISQPKK…VANLENESKV (235 aa). The interval 390–423 is disordered; sequence NQHAELETEEEEKNLEEQTERNGDVANLENESKV. Positions 420–423 match the PDZ-binding motif; sequence ESKV.

This sequence belongs to the inward rectifier-type potassium channel (TC 1.A.2.1) family. KCNJ6 subfamily. As to quaternary structure, associates with KCNJ3/GIRK1 or KCNJ5/GRIK4 to form a G-protein-activated heteromultimer pore-forming unit. The resulting inward current is much larger. Interacts (via PDZ-binding motif) with SNX27 (via PDZ domain); the interaction is required when endocytosed to prevent degradation in lysosomes and promote recycling to the plasma membrane.

It localises to the membrane. The catalysed reaction is K(+)(in) = K(+)(out). With respect to regulation, activated by phosphatidylinositol 4,5 biphosphate (PtdIns(4,5)P2). In terms of biological role, inward rectifier potassium channels are characterized by a greater tendency to allow potassium to flow into the cell rather than out of it. Their voltage dependence is regulated by the concentration of extracellular potassium; as external potassium is raised, the voltage range of the channel opening shifts to more positive voltages. The inward rectification is mainly due to the blockage of outward current by internal magnesium. This potassium channel may be involved in the regulation of insulin secretion by glucose and/or neurotransmitters acting through G-protein-coupled receptors. The sequence is that of G protein-activated inward rectifier potassium channel 2 (KCNJ6) from Pongo abelii (Sumatran orangutan).